Here is a 544-residue protein sequence, read N- to C-terminus: Chaperonin GroEL 2 (544 aa).

ATP is bound by residues 29–32, 86–90, Gly-413, 482–484, and Asp-498; these read TLGP, DGTTT, and NVL.

The protein belongs to the chaperonin (HSP60) family. In terms of assembly, forms a cylinder of 14 subunits composed of two heptameric rings stacked back-to-back. Interacts with the co-chaperonin GroES.

The protein resides in the cytoplasm. It carries out the reaction ATP + H2O + a folded polypeptide = ADP + phosphate + an unfolded polypeptide.. Functionally, together with its co-chaperonin GroES, plays an essential role in assisting protein folding. The GroEL-GroES system forms a nano-cage that allows encapsulation of the non-native substrate proteins and provides a physical environment optimized to promote and accelerate protein folding. This is Chaperonin GroEL 2 from Roseiflexus sp. (strain RS-1).